A 279-amino-acid chain; its full sequence is Putative carbamate hydrolase RutD (279 aa).

The region spanning 23 to 126 (PVVVLISGLG…LVSVNGWLRI (104 aa)) is the AB hydrolase-1 domain.

The protein belongs to the AB hydrolase superfamily. Hydrolase RutD family.

The catalysed reaction is carbamate + 2 H(+) = NH4(+) + CO2. In terms of biological role, involved in pyrimidine catabolism. May facilitate the hydrolysis of carbamate, a reaction that can also occur spontaneously. The sequence is that of Putative carbamate hydrolase RutD from Escherichia coli O17:K52:H18 (strain UMN026 / ExPEC).